The sequence spans 67 residues: DNA-directed RNA polymerase subunit omega (67 aa).

This sequence belongs to the RNA polymerase subunit omega family. In terms of assembly, the RNAP catalytic core consists of 2 alpha, 1 beta, 1 beta' and 1 omega subunit. When a sigma factor is associated with the core the holoenzyme is formed, which can initiate transcription.

It catalyses the reaction RNA(n) + a ribonucleoside 5'-triphosphate = RNA(n+1) + diphosphate. In terms of biological role, promotes RNA polymerase assembly. Latches the N- and C-terminal regions of the beta' subunit thereby facilitating its interaction with the beta and alpha subunits. The sequence is that of DNA-directed RNA polymerase subunit omega from Acidovorax ebreus (strain TPSY) (Diaphorobacter sp. (strain TPSY)).